Here is a 589-residue protein sequence, read N- to C-terminus: Protein drl-1 (589 aa).

The tract at residues 1-51 (MHSEEKYLHIPNNTKYPEIIVEEEEEDPSEEERSELSETDDVATPLRPSDT) is disordered. The span at 20 to 41 (IVEEEEEDPSEEERSELSETDD) shows a compositional bias: acidic residues. Residues 97–373 (WRINEDVMKD…QNLLESHGSK (277 aa)) enclose the Protein kinase domain. Transmembrane regions (helical) follow at residues 429 to 449 (GFIP…VLLV), 456 to 476 (LCAA…IFLI), and 491 to 511 (GFVV…TTLC).

The protein belongs to the protein kinase superfamily. STE Ser/Thr protein kinase family. Expressed in vulval and body wall muscles, hypodermis, seam cells and tissues next to pharynx and anus.

The protein resides in the membrane. In terms of biological role, negatively regulates lifespan and health span probably by participating in nutrient sensing. This is Protein drl-1 from Caenorhabditis elegans.